The following is a 124-amino-acid chain: ATP synthase epsilon chain (124 aa).

This sequence belongs to the ATPase epsilon chain family. F-type ATPases have 2 components, CF(1) - the catalytic core - and CF(0) - the membrane proton channel. CF(1) has five subunits: alpha(3), beta(3), gamma(1), delta(1), epsilon(1). CF(0) has three main subunits: a, b and c.

It is found in the cell membrane. In terms of biological role, produces ATP from ADP in the presence of a proton gradient across the membrane. In Streptomyces avermitilis (strain ATCC 31267 / DSM 46492 / JCM 5070 / NBRC 14893 / NCIMB 12804 / NRRL 8165 / MA-4680), this protein is ATP synthase epsilon chain.